Here is a 484-residue protein sequence, read N- to C-terminus: Palmitoyltransferase ZDHHC1 (484 aa).

Polar residues-rich tracts occupy residues 1–11 (MNICNKPSNKT) and 19–34 (TAPS…LQGQ). Positions 1 to 38 (MNICNKPSNKTAPEKSVWTAPSQDSGPSPELQGQRSRR) are disordered. Residues 1–49 (MNICNKPSNKTAPEKSVWTAPSQDSGPSPELQGQRSRRNGWSWPPHPLQ) are Cytoplasmic-facing. A mediates interaction with STING1 region spans residues 1–268 (MNICNKPSNK…GHLLCFHIYL (268 aa)). Residues 50-70 (IVAWLLYLFFAVIGFGVLVPL) form a helical membrane-spanning segment. The Lumenal portion of the chain corresponds to 71 to 74 (LPHH). Residues 75 to 95 (WVPAGYACMGAIFAGHLVVHL) traverse the membrane as a helical segment. Topologically, residues 96–182 (TAVSIDPADA…YRLFLHSVAS (87 aa)) are cytoplasmic. The region spanning 131-181 (LHCNLCDVDVSARSKHCSACNKCVCGFDHHCKWLNNCVGERNYRLFLHSVA) is the DHHC domain. Catalysis depends on cysteine 161, which acts as the S-palmitoyl cysteine intermediate. Residues 183–203 (ALLGVLLLVLVATYVFVEFFV) traverse the membrane as a helical segment. At 204–238 (NPMRLRTNQHFEVLKNHTDVWFVFLPAAPVETQAP) the chain is on the lumenal side. Residues 239 to 259 (AILALAALLILLGLLSTALLG) traverse the membrane as a helical segment. Residues 260 to 484 (HLLCFHIYLM…GTPGGGDGLP (225 aa)) lie on the Cytoplasmic side of the membrane. Disordered stretches follow at residues 341 to 415 (TQGQ…VHAG) and 444 to 484 (LGAP…DGLP). Positions 364 to 374 (PQKKRKRRVYR) are enriched in basic residues. The span at 380–392 (VLDRELPLPRLRE) shows a compositional bias: basic and acidic residues. The span at 395–415 (TPSRRSSSSSDSTSASPVHAG) shows a compositional bias: low complexity. Residues 475 to 484 (GTPGGGDGLP) show a composition bias toward gly residues.

It belongs to the DHHC palmitoyltransferase family. Interacts with STING1; ZDHHC1 constitutively interacts with STING1 and in presence of DNA viruses activates it by promoting its cGAMP-induced oligomerization and the recruitment of downstream signaling components. Expressed at high levels in fetal lung and heart. Expressed at lower levels in fetal liver and brain. Also detected in adult islet cells of pancreas, Leydig cells of testis, retina and molecular layer of cerebellum.

It localises to the endosome membrane. The protein resides in the endoplasmic reticulum membrane. The protein localises to the golgi apparatus. It carries out the reaction L-cysteinyl-[protein] + hexadecanoyl-CoA = S-hexadecanoyl-L-cysteinyl-[protein] + CoA. Its function is as follows. Palmitoyltransferase that catalyzes the addition of palmitate onto various protein substrates, such as NCDN and NLRP3. Has a palmitoyltransferase activity toward NCDN and regulates NCDN association with endosome membranes through this palmitoylation. Acts as an activator of the NLRP3 inflammasome by mediating palmitoylation of 'Cys-130' and 'Cys-958' of NLRP3, thereby promoting NLRP3 phosphorylation and activation by NEK7. Functionally, also has a palmitoyltransferase activity-independent function in DNA virus-triggered and CGAS-mediated innate immune response. Functions as an activator of STING1 by promoting its cGAMP-induced oligomerization and the recruitment of downstream signaling components. This Mus musculus (Mouse) protein is Palmitoyltransferase ZDHHC1.